The following is a 423-amino-acid chain: Myb-like protein G (423 aa).

One can recognise an HTH myb-type domain in the interval Thr-36–Gln-90. A DNA-binding region (H-T-H motif) is located at residues Trp-63–Phe-86. 3 disordered regions span residues Asn-93 to Lys-116, Gln-177 to Leu-205, and Ile-284 to Tyr-372. Over residues Gln-177–Gly-202 the composition is skewed to low complexity. The span at Pro-286–Val-295 shows a compositional bias: polar residues. Over residues Asn-302–Asn-354 the composition is skewed to low complexity. Positions Gln-361 to Tyr-372 are enriched in polar residues.

Its subcellular location is the nucleus. This is Myb-like protein G (mybG) from Dictyostelium discoideum (Social amoeba).